The following is a 396-amino-acid chain: MAPKKAGDGVKAHPIIGRFGTSLKIGIVGLPNVGKSTFFNVLTKSQAAAENFPFCTIDPNESRVPVPDDRFDFLCQYHKPPSKIPAFLNVVDIAGLVKGAHTGQGLGNSFLSHINACDGIFHLMRAFEDDDITHVEGSVDPVRDIEIIHEELRLKDEELITQSIDKLEKVAVRGGDKKLKPEYDVMCKIKTWVIDEKKAVRFYHDWNDKEIDVLNKHLFFTSKPMIYLVNLSEKDYIRKKNKWLIKIKEWVDKHDPGALVIPFSGALELKLQDMSAEEKQKYLEENMTQSALPKIIKAGYAALQLEYFFTAGPDEVRAWTIRKGTKAPQAAGKIHTDFEKGFIMAEVMKYEDFKEGGSEAAVKAAGKYRQQGRNYIVEDGDIIFFKFNTPQQPKKK.

The 261-residue stretch at 23-283 (LKIGIVGLPN…MSAEEKQKYL (261 aa)) folds into the OBG-type G domain. 32–37 (NVGKST) contributes to the ATP binding site. Positions 36 and 56 each coordinate Mg(2+). L231 is an ATP binding site. Positions 267–274 (LELKLQDM) match the Nuclear export signal motif. Residues 304–387 (QLEYFFTAGP…EDGDIIFFKF (84 aa)) form the TGS domain.

It belongs to the TRAFAC class OBG-HflX-like GTPase superfamily. OBG GTPase family. YchF/OLA1 subfamily. In terms of assembly, monomer. It depends on Mg(2+) as a cofactor.

The protein localises to the cytoplasm. Its subcellular location is the nucleus. It is found in the nucleolus. In terms of biological role, hydrolyzes ATP, and can also hydrolyze GTP with lower efficiency. Has lower affinity for GTP. In Gallus gallus (Chicken), this protein is Obg-like ATPase 1.